We begin with the raw amino-acid sequence, 77 residues long: MAVGTTTGELRELSDDELTDKLRESKEELFNLRFQMATGQLANNRRLRVVRQEIARVYTVLRERELGLAAGPGGEDS.

Belongs to the universal ribosomal protein uL29 family.

This Mycolicibacterium gilvum (strain PYR-GCK) (Mycobacterium gilvum (strain PYR-GCK)) protein is Large ribosomal subunit protein uL29.